The chain runs to 372 residues: MAPRKNSKTQQPTGDNRKKALDAALAMIEKDFGKGAVMRLGDENRPPISAISSGNTAIDVALGIGGFPRGRIVEVYGPESSGKTTVALHAIAQAQKAGGIAAFIDAEHALDPDYARKLGVDTDALLVSQPDTGEQALEIADMLVRSGAIDIIVIDSVAALTPKAEIEGEMGDSHVGLQARLMSQALRKMTGALYNSGTTAIFINQLREKIGVMFGSPETTTGGKALKFYASVRCDVRRIQTLKDGQDAIGNRTRLKVVKNKVSPPFKIAEFDIMYGEGISRESSIIDLGVDNGIIKKSGSWFTYEGDQLGQGKEKVRLYLKETPELADEIEDKIFRALHIGKYAALKDADDALTDDPVDMVPNVDFDDSDDD.

Residue 77–84 coordinates ATP; the sequence is GPESSGKT.

This sequence belongs to the RecA family.

It is found in the cytoplasm. Its function is as follows. Can catalyze the hydrolysis of ATP in the presence of single-stranded DNA, the ATP-dependent uptake of single-stranded DNA by duplex DNA, and the ATP-dependent hybridization of homologous single-stranded DNAs. It interacts with LexA causing its activation and leading to its autocatalytic cleavage. The polypeptide is Protein RecA (Corynebacterium diphtheriae (strain ATCC 700971 / NCTC 13129 / Biotype gravis)).